Consider the following 2812-residue polypeptide: Zonadhesin (2812 aa).

Positions 1–17 (MVPPVWTLLLLVGAALF) are cleaved as a signal peptide. The Extracellular segment spans residues 18-2757 (RKEKPPDQKL…DAPPPRKPAS (2740 aa)). 3 consecutive MAM domains span residues 39–204 (TQCD…SCNR), 209–368 (QTCS…PCGE), and 371–536 (PQCD…TCPV). The segment at 61–84 (EDWVRASGPSPTGSTGAPGGYPNG) is disordered. A compositionally biased stretch (low complexity) spans 66 to 75 (ASGPSPTGST). N-linked (GlcNAc...) asparagine glycosylation is found at N333 and N493. Disordered regions lie at residues 545–884 (VSPV…PTEK) and 904–929 (EKPTISPEKPTISTEKPTIPTEKPTI). A compositionally biased stretch (low complexity) spans 547–558 (PVSSTGPSETTG). Residues 559-570 (LTENPTISTKKP) are compositionally biased toward polar residues. The tract at residues 573–1041 (SIEKPSVTTE…GTTTTSRSST (469 aa)) is 66 X heptapeptide repeats (approximate) (mucin-like domain). 5 stretches are compositionally biased toward low complexity: residues 592–603 (TIPTEKPTISTE), 651–675 (TEKPTVPTEEPTTPTEETTTSMEEP), 713–842 (SPEK…STEK), 853–868 (STEKPTIPTEKPTISP), and 916–929 (STEKPTIPTEKPTI). The TIL 1 domain maps to 1044–1093 (CPPNARYESCACPASCKSPRPSCGPLCREGCVCNPGFLFSDNHCIQASSC). In terms of domain architecture, VWFC 1 spans 1103–1148 (EPGAEWFSPNCTEHCRCWPGSRVECQISQCGTHTVCQLKNGQYGCH). 2 N-linked (GlcNAc...) asparagine glycosylation sites follow: N1112 and N1188. The region spanning 1154 to 1331 (ATCLVYGDPH…TDQDEDQECQ (178 aa)) is the VWFD 1 domain. 2 cysteine pairs are disulfide-bonded: C1156/C1291 and C1178/C1330. The segment covering 1302-1316 (HLKLDGSPAGDKEEL) has biased composition (basic and acidic residues). The interval 1302–1323 (HLKLDGSPAGDKEELGNSWQTD) is disordered. A TIL 2 domain is found at 1426–1479 (CPPNSKYSLCAKPCPDTCHSGFSGMFCSDRCVEACECNPGFVLSGLECIPRSQC). One can recognise a VWFC 2 domain in the interval 1480 to 1535 (GCLHPAGSYFKVGERWYKPGCKELCVCESNNRIRCQPWRCRAQEFCGQQDGIYGCH). The region spanning 1540–1720 (ATCTASGDPH…LPESSEPGCF (181 aa)) is the VWFD 2 domain. 2 cysteine pairs are disulfide-bonded: C1542–C1680 and C1564–C1719. N1685 and N1804 each carry an N-linked (GlcNAc...) asparagine glycan. Residues 1812-1867 (CPPGSSYSPCSSPCPDTCSSINNPRDCPKALPCAESCECQKGHILSGTSCVPLGQC) enclose the TIL 3 domain. Residues 1868–1924 (GCTDPAGSYHPVGERWYTENTCTRLCTCSVHNNITCFQSTCKPNQICWALDGLLHCR) form the VWFC 3 domain. Residues N1900 and N1946 are each glycosylated (N-linked (GlcNAc...) asparagine). Residues 1929–2108 (GVCQLPGESH…KDKDIDPSCQ (180 aa)) enclose the VWFD 3 domain. 2 disulfides stabilise this stretch: C1931/C2069 and C1953/C2107. N-linked (GlcNAc...) asparagine glycosylation occurs at N2203. One can recognise a TIL 4 domain in the interval 2211–2267 (CPAYSSYTNCLPSCSPSCWDLDGRCEGAKVPSACAEGCICQPGYVLSEDKCVPRSQC). Residues 2268–2329 (GCKDAHGGSI…NSNCVSDKSE (62 aa)) enclose the VWFC 4 domain. The VWFD 4 domain maps to 2329 to 2505 (EQCSVYGDPR…SWEVKTEDAL (177 aa)). C2331 and C2468 form a disulfide bridge. N2542 and N2701 each carry an N-linked (GlcNAc...) asparagine glycan. The region spanning 2652-2797 (CGCTSNGIYY…KREKTQEGDR (146 aa)) is the VWFC 5 domain. In terms of domain architecture, EGF-like spans 2708–2744 (PESPCLQNPCQNDGQCREQGATFTCECEVGYGGGLCM). Cystine bridges form between C2712-C2723, C2717-C2732, and C2734-C2743. A helical membrane pass occupies residues 2758 to 2778 (NLVGVLLGLLVPVVVVLLAVT). Over 2779–2812 (RECIYRTRRKREKTQEGDRLARLVDTDTVLDCAC) the chain is Cytoplasmic.

As to quaternary structure, probably forms covalent oligomers. As to expression, in testis, primarily in haploid spermatids.

It localises to the cell membrane. Functionally, binds in a species-specific manner to the zona pellucida of the egg. May be involved in gamete recognition and/or signaling. The sequence is that of Zonadhesin (ZAN) from Homo sapiens (Human).